Here is a 233-residue protein sequence, read N- to C-terminus: Orotidine 5'-phosphate decarboxylase (233 aa).

Residues D9, K31, D58–T67, T120, R182, Q191, G211, and R212 contribute to the substrate site. Catalysis depends on K60, which acts as the Proton donor.

The protein belongs to the OMP decarboxylase family. Type 1 subfamily. Homodimer.

The enzyme catalyses orotidine 5'-phosphate + H(+) = UMP + CO2. Its pathway is pyrimidine metabolism; UMP biosynthesis via de novo pathway; UMP from orotate: step 2/2. Functionally, catalyzes the decarboxylation of orotidine 5'-monophosphate (OMP) to uridine 5'-monophosphate (UMP). In Listeria monocytogenes serotype 4b (strain CLIP80459), this protein is Orotidine 5'-phosphate decarboxylase.